We begin with the raw amino-acid sequence, 296 residues long: MAQKVEAKGGKGGNQWDDGSDHDAVTKIQVAVGGMGIQYIQFDYVKNGQTEQTPLRGIKGSTIPTDPFVINHPEEHLVSIEIWYKPDGLIQGLRFISNKKTSRFIGYDRGTRSFLQVQDKKIIGFHGSAGDNLNSLGAYFAPLTIPLTPAKPLPALGSDDGTAWDDGAYVGVKKVYVGQAQDGISAVKFVYDKSPEEVTGEEHGKSTLLGFEEFVLDYPSEYIIAVEGTYDKIFGSDGSVITMLRFKTNKQTSPPFGLEAGTAFELKEEGHKIVGFHGRADALLHKIGVHVRPVSN.

Residues 1–20 (MAQKVEAKGGKGGNQWDDGS) form a disordered region. The residue at position 2 (Ala2) is an N-acetylalanine. Jacalin-type lectin domains are found at residues 2–142 (AQKV…YFAP) and 150–293 (AKPL…HVRP).

It belongs to the jacalin lectin family. In terms of assembly, component of the PYK10 complex, at least composed of PYK10/BGLU23, BGLU21, BGLU22, JAL22, JAL23, PBP1/JAL30, PBP2/JAL31, JAL32, JAL33, JAL34, JAL35, GLL22 and GLL23.

In terms of biological role, polymerizer-type lectin that may facilitate the correct polymerization of BGLU23/PYK10 upon tissue damage. Activates BGLU21, BGLU22 and BGLU23. The protein is PYK10-binding protein 2 (PBP2) of Arabidopsis thaliana (Mouse-ear cress).